Consider the following 142-residue polypeptide: Peptide methionine sulfoxide reductase MsrB (142 aa).

One can recognise a MsrB domain in the interval 3 to 126 (KEELKKKLSP…NSAALRFIPF (124 aa)). The active-site Nucleophile is Cys115.

The protein belongs to the MsrB Met sulfoxide reductase family.

The enzyme catalyses L-methionyl-[protein] + [thioredoxin]-disulfide + H2O = L-methionyl-(R)-S-oxide-[protein] + [thioredoxin]-dithiol. The sequence is that of Peptide methionine sulfoxide reductase MsrB from Lactococcus lactis subsp. cremoris (strain SK11).